The sequence spans 689 residues: Beta-galactosidase Pbg (689 aa).

Arg118 contributes to the substrate binding site. Residue Cys122 coordinates Zn(2+). A substrate-binding site is contributed by Asn156. The active-site Proton donor is the Glu157. Zn(2+) contacts are provided by Cys162, Cys164, and Cys167. The Nucleophile role is filled by Glu318. Substrate contacts are provided by residues Trp326 and 366–369 (EKFH).

The protein belongs to the glycosyl hydrolase 42 family.

The enzyme catalyses Hydrolysis of terminal non-reducing beta-D-galactose residues in beta-D-galactosides.. The chain is Beta-galactosidase Pbg from Clostridium perfringens (strain ATCC 13124 / DSM 756 / JCM 1290 / NCIMB 6125 / NCTC 8237 / Type A).